A 151-amino-acid chain; its full sequence is Putative pre-16S rRNA nuclease (151 aa).

Belongs to the YqgF nuclease family.

Its subcellular location is the cytoplasm. Could be a nuclease involved in processing of the 5'-end of pre-16S rRNA. In Pelagibacter ubique (strain HTCC1062), this protein is Putative pre-16S rRNA nuclease.